The chain runs to 111 residues: Small ribosomal subunit protein uS10 (111 aa).

This sequence belongs to the universal ribosomal protein uS10 family. Part of the 30S ribosomal subunit.

In terms of biological role, involved in the binding of tRNA to the ribosomes. This is Small ribosomal subunit protein uS10 from Xanthomonas euvesicatoria pv. vesicatoria (strain 85-10) (Xanthomonas campestris pv. vesicatoria).